The chain runs to 417 residues: Vacuolar cation/proton exchanger 3 (417 aa).

At 1–45 (MENPQIEMGAFKANGPQLQNGGLRSSMVQSWNLQRFVESALRSIR) the chain is on the cytoplasmic side. A helical membrane pass occupies residues 46–66 (IVIFTSKLNLLLPFGPASIIL). Residues 67 to 73 (HYTTSRH) are Extracellular-facing. A helical transmembrane segment spans residues 74 to 94 (GLVFLFSMLGITPLAERLGYA). Residues 95 to 105 (TEQLAIYTGPT) are Cytoplasmic-facing. The chain crosses the membrane as a helical span at residues 106-126 (VGGLLNATFGNATEMIIAIYA). Residues 115–150 (GNATEMIIAIYALKNGMIRVVQQSLLGSILSNMLLV) are cation selection. The Extracellular segment spans residues 127–140 (LKNGMIRVVQQSLL). Residues 141–161 (GSILSNMLLVMGCAFFAGGIV) traverse the membrane as a helical segment. The Cytoplasmic portion of the chain corresponds to 162–173 (HRNKDQVFSKAT). Residues 174 to 194 (AVVNSGLLLMAVMGLMFPAVL) form a helical membrane-spanning segment. The Extracellular portion of the chain corresponds to 195-207 (HFTHSEVRQGASE). Residues 208–230 (VSLSRFSSCIMLVAYASYLYFQL) form a helical membrane-spanning segment. Over 231–258 (SGRNNAYSPIGSEEMPNEDAAEEDEESE) the chain is Cytoplasmic. The helical transmembrane segment at 259-279 (IGMWESIAWLAMLTLWVSILS) threads the bilayer. Topologically, residues 280-291 (EYLVNAIEGASD) are extracellular. The helical transmembrane segment at 292–312 (SLNLPVAFISVILLPIVGNAA) threads the bilayer. The cation selection stretch occupies residues 309-344 (GNAAEHASAIMFAMKDKLDITLGVAIGSSTQISMFV). The Cytoplasmic portion of the chain corresponds to 313 to 330 (EHASAIMFAMKDKLDITL). The chain crosses the membrane as a helical span at residues 331–351 (GVAIGSSTQISMFVIPFCVVI). The Extracellular segment spans residues 352–360 (GWMMGQKMD). A helical membrane pass occupies residues 361 to 381 (LNFQLFETATLFITVLVVAFM). Residues 382 to 389 (LQDGVANY) lie on the Cytoplasmic side of the membrane. Residues 390–410 (LKGLMLILCYLIVAASFFVHV) traverse the membrane as a helical segment. At 411-417 (DPQSSDD) the chain is on the extracellular side.

This sequence belongs to the Ca(2+):cation antiporter (CaCA) (TC 2.A.19) family. Cation/proton exchanger (CAX) subfamily. Ubiquitous.

The protein resides in the vacuole membrane. Functionally, vacuolar cation/proton exchanger (CAX). Translocates Ca(2+) and other metal ions into vacuoles using the proton gradient formed by H(+)-ATPase and H(+)-pyrophosphatase. This chain is Vacuolar cation/proton exchanger 3 (CAX3), found in Oryza sativa subsp. japonica (Rice).